Consider the following 397-residue polypeptide: Imidazolonepropionase (397 aa).

The Fe(3+) site is built by histidine 66 and histidine 68. Zn(2+) is bound by residues histidine 66 and histidine 68. 4-imidazolone-5-propanoate contacts are provided by arginine 75, tyrosine 138, and histidine 171. An N-formimidoyl-L-glutamate-binding site is contributed by tyrosine 138. Residue histidine 236 participates in Fe(3+) binding. Histidine 236 lines the Zn(2+) pocket. Glutamine 239 contributes to the 4-imidazolone-5-propanoate binding site. Aspartate 311 contacts Fe(3+). Aspartate 311 contacts Zn(2+). N-formimidoyl-L-glutamate contacts are provided by asparagine 313 and glycine 315. A 4-imidazolone-5-propanoate-binding site is contributed by serine 316.

The protein belongs to the metallo-dependent hydrolases superfamily. HutI family. The cofactor is Zn(2+). It depends on Fe(3+) as a cofactor.

The protein resides in the cytoplasm. It carries out the reaction 4-imidazolone-5-propanoate + H2O = N-formimidoyl-L-glutamate. The protein operates within amino-acid degradation; L-histidine degradation into L-glutamate; N-formimidoyl-L-glutamate from L-histidine: step 3/3. Its function is as follows. Catalyzes the hydrolytic cleavage of the carbon-nitrogen bond in imidazolone-5-propanoate to yield N-formimidoyl-L-glutamate. It is the third step in the universal histidine degradation pathway. The polypeptide is Imidazolonepropionase (Roseobacter denitrificans (strain ATCC 33942 / OCh 114) (Erythrobacter sp. (strain OCh 114))).